An 84-amino-acid chain; its full sequence is Large ribosomal subunit protein bL27 (84 aa).

The protein belongs to the bacterial ribosomal protein bL27 family.

The chain is Large ribosomal subunit protein bL27 from Campylobacter jejuni subsp. jejuni serotype O:6 (strain 81116 / NCTC 11828).